We begin with the raw amino-acid sequence, 157 residues long: Ribosomal RNA large subunit methyltransferase H (157 aa).

Residues Leu73, Gly105, and 124 to 129 (LSRMTF) contribute to the S-adenosyl-L-methionine site.

The protein belongs to the RNA methyltransferase RlmH family. As to quaternary structure, homodimer.

The protein resides in the cytoplasm. It carries out the reaction pseudouridine(1915) in 23S rRNA + S-adenosyl-L-methionine = N(3)-methylpseudouridine(1915) in 23S rRNA + S-adenosyl-L-homocysteine + H(+). In terms of biological role, specifically methylates the pseudouridine at position 1915 (m3Psi1915) in 23S rRNA. This Porphyromonas gingivalis (strain ATCC 33277 / DSM 20709 / CIP 103683 / JCM 12257 / NCTC 11834 / 2561) protein is Ribosomal RNA large subunit methyltransferase H.